A 340-amino-acid chain; its full sequence is GTPase Obg (340 aa).

The region spanning 1–158 is the Obg domain; it reads MSFIDEAKIY…KHIILKLKII (158 aa). Residues 159–325 form the OBG-type G domain; that stretch reads SDVGIIGLPN…LSTLIKQIHK (167 aa). GTP contacts are provided by residues 165–172, 190–194, 211–214, 278–281, and 306–308; these read GLPNAGKS, FTTLE, DIPG, NKSD, and SSI. Mg(2+) is bound by residues serine 172 and threonine 192.

This sequence belongs to the TRAFAC class OBG-HflX-like GTPase superfamily. OBG GTPase family. As to quaternary structure, monomer. It depends on Mg(2+) as a cofactor.

The protein localises to the cytoplasm. Its function is as follows. An essential GTPase which binds GTP, GDP and possibly (p)ppGpp with moderate affinity, with high nucleotide exchange rates and a fairly low GTP hydrolysis rate. Plays a role in control of the cell cycle, stress response, ribosome biogenesis and in those bacteria that undergo differentiation, in morphogenesis control. The protein is GTPase Obg of Ehrlichia canis (strain Jake).